Here is a 231-residue protein sequence, read N- to C-terminus: Axial regulator YABBY 4 (231 aa).

A C4-type zinc finger spans residues Cys-26–Cys-53. Disordered stretches follow at residues Lys-98–Asp-120 and Asn-211–Glu-231.

This sequence belongs to the YABBY family. Interacts with SPL/NZZ.

Its subcellular location is the nucleus. Essential for the formation and the abaxial-adaxial asymmetric growth of the ovule outer integument. The sequence is that of Axial regulator YABBY 4 (YAB4) from Arabidopsis thaliana (Mouse-ear cress).